The chain runs to 274 residues: Penicillin-insensitive murein endopeptidase (274 aa).

Residues 1-19 (MNKTAIALLALLASSASLA) form the signal peptide. 3 disulfides stabilise this stretch: Cys44-Cys265, Cys187-Cys235, and Cys216-Cys223. Zn(2+)-binding residues include His110, His113, Asp120, Asp147, His150, and His211. Residues 227 to 274 (PLPPPGDGCGAELQSWFEPPKPGTTKPEKKTPPPLPPSCQALLDEHVI) form a disordered region.

The protein belongs to the peptidase M74 family. As to quaternary structure, dimer. Zn(2+) is required as a cofactor.

It localises to the periplasm. Its function is as follows. Murein endopeptidase that cleaves the D-alanyl-meso-2,6-diamino-pimelyl amide bond that connects peptidoglycan strands. Likely plays a role in the removal of murein from the sacculus. The chain is Penicillin-insensitive murein endopeptidase from Escherichia coli O6:K15:H31 (strain 536 / UPEC).